Reading from the N-terminus, the 234-residue chain is tRNA1(Val) (adenine(37)-N6)-methyltransferase (234 aa).

The protein belongs to the methyltransferase superfamily. tRNA (adenine-N(6)-)-methyltransferase family.

The protein resides in the cytoplasm. It catalyses the reaction adenosine(37) in tRNA1(Val) + S-adenosyl-L-methionine = N(6)-methyladenosine(37) in tRNA1(Val) + S-adenosyl-L-homocysteine + H(+). Specifically methylates the adenine in position 37 of tRNA(1)(Val) (anticodon cmo5UAC). In Pedobacter heparinus (strain ATCC 13125 / DSM 2366 / CIP 104194 / JCM 7457 / NBRC 12017 / NCIMB 9290 / NRRL B-14731 / HIM 762-3), this protein is tRNA1(Val) (adenine(37)-N6)-methyltransferase.